The sequence spans 223 residues: Phosphoribosylformylglycinamidine synthase subunit PurQ (223 aa).

One can recognise a Glutamine amidotransferase type-1 domain in the interval 2-223; it reads KVAIIRFPGT…LLENFINFNF (222 aa). Cys84 serves as the catalytic Nucleophile. Active-site residues include His192 and Glu194.

Part of the FGAM synthase complex composed of 1 PurL, 1 PurQ and 2 PurS subunits.

It localises to the cytoplasm. It catalyses the reaction N(2)-formyl-N(1)-(5-phospho-beta-D-ribosyl)glycinamide + L-glutamine + ATP + H2O = 2-formamido-N(1)-(5-O-phospho-beta-D-ribosyl)acetamidine + L-glutamate + ADP + phosphate + H(+). The catalysed reaction is L-glutamine + H2O = L-glutamate + NH4(+). It participates in purine metabolism; IMP biosynthesis via de novo pathway; 5-amino-1-(5-phospho-D-ribosyl)imidazole from N(2)-formyl-N(1)-(5-phospho-D-ribosyl)glycinamide: step 1/2. Part of the phosphoribosylformylglycinamidine synthase complex involved in the purines biosynthetic pathway. Catalyzes the ATP-dependent conversion of formylglycinamide ribonucleotide (FGAR) and glutamine to yield formylglycinamidine ribonucleotide (FGAM) and glutamate. The FGAM synthase complex is composed of three subunits. PurQ produces an ammonia molecule by converting glutamine to glutamate. PurL transfers the ammonia molecule to FGAR to form FGAM in an ATP-dependent manner. PurS interacts with PurQ and PurL and is thought to assist in the transfer of the ammonia molecule from PurQ to PurL. This is Phosphoribosylformylglycinamidine synthase subunit PurQ from Campylobacter jejuni subsp. jejuni serotype O:2 (strain ATCC 700819 / NCTC 11168).